We begin with the raw amino-acid sequence, 317 residues long: Adenine deaminase (317 aa).

Positions 14, 16, and 194 each coordinate Zn(2+). Glutamate 197 (proton donor) is an active-site residue. Aspartate 275 is a Zn(2+) binding site. Substrate is bound at residue aspartate 276.

Belongs to the metallo-dependent hydrolases superfamily. Adenosine and AMP deaminases family. Adenine deaminase type 2 subfamily. It depends on Zn(2+) as a cofactor.

The catalysed reaction is adenine + H2O + H(+) = hypoxanthine + NH4(+). In terms of biological role, catalyzes the hydrolytic deamination of adenine to hypoxanthine. Plays an important role in the purine salvage pathway and in nitrogen catabolism. This chain is Adenine deaminase, found in Bordetella bronchiseptica (strain ATCC BAA-588 / NCTC 13252 / RB50) (Alcaligenes bronchisepticus).